A 242-amino-acid polypeptide reads, in one-letter code: 1-(5-phosphoribosyl)-5-[(5-phosphoribosylamino)methylideneamino] imidazole-4-carboxamide isomerase (242 aa).

Residue Asp8 is the Proton acceptor of the active site. The active-site Proton donor is Asp130.

This sequence belongs to the HisA/HisF family.

Its subcellular location is the cytoplasm. The catalysed reaction is 1-(5-phospho-beta-D-ribosyl)-5-[(5-phospho-beta-D-ribosylamino)methylideneamino]imidazole-4-carboxamide = 5-[(5-phospho-1-deoxy-D-ribulos-1-ylimino)methylamino]-1-(5-phospho-beta-D-ribosyl)imidazole-4-carboxamide. It participates in amino-acid biosynthesis; L-histidine biosynthesis; L-histidine from 5-phospho-alpha-D-ribose 1-diphosphate: step 4/9. This is 1-(5-phosphoribosyl)-5-[(5-phosphoribosylamino)methylideneamino] imidazole-4-carboxamide isomerase from Thioalkalivibrio sulfidiphilus (strain HL-EbGR7).